A 103-amino-acid polypeptide reads, in one-letter code: RNA-binding protein Hfq (103 aa).

A Sm domain is found at 9–68 (DPFLNALRRERVPVSIYLVNGIKLQGQIESFDQFVILLKNTVSQMVYKHAISTVVPSRPV). The interval 63 to 103 (VPSRPVSHHSNNAGGGTGSNFHHGSNAQGSSAPAQDSDETE) is disordered. Residues 81–96 (SNFHHGSNAQGSSAPA) are compositionally biased toward polar residues.

This sequence belongs to the Hfq family. Homohexamer.

RNA chaperone that binds small regulatory RNA (sRNAs) and mRNAs to facilitate mRNA translational regulation in response to envelope stress, environmental stress and changes in metabolite concentrations. Also binds with high specificity to tRNAs. This is RNA-binding protein Hfq from Enterobacter sp. (strain 638).